A 104-amino-acid polypeptide reads, in one-letter code: Large ribosomal subunit protein uL24 (104 aa).

The protein belongs to the universal ribosomal protein uL24 family. In terms of assembly, part of the 50S ribosomal subunit.

Its function is as follows. One of two assembly initiator proteins, it binds directly to the 5'-end of the 23S rRNA, where it nucleates assembly of the 50S subunit. One of the proteins that surrounds the polypeptide exit tunnel on the outside of the subunit. This chain is Large ribosomal subunit protein uL24, found in Shigella flexneri.